Consider the following 1405-residue polypeptide: DNA-directed RNA polymerase subunit beta' (1405 aa).

Zn(2+) contacts are provided by Cys-65, Cys-67, Cys-80, and Cys-83. Mg(2+) is bound by residues Asp-468, Asp-470, and Asp-472. The Zn(2+) site is built by Cys-811, Cys-885, Cys-892, and Cys-895.

This sequence belongs to the RNA polymerase beta' chain family. As to quaternary structure, the RNAP catalytic core consists of 2 alpha, 1 beta, 1 beta' and 1 omega subunit. When a sigma factor is associated with the core the holoenzyme is formed, which can initiate transcription. It depends on Mg(2+) as a cofactor. The cofactor is Zn(2+).

The catalysed reaction is RNA(n) + a ribonucleoside 5'-triphosphate = RNA(n+1) + diphosphate. DNA-dependent RNA polymerase catalyzes the transcription of DNA into RNA using the four ribonucleoside triphosphates as substrates. This Azobacteroides pseudotrichonymphae genomovar. CFP2 protein is DNA-directed RNA polymerase subunit beta'.